The sequence spans 250 residues: Probable transcriptional regulatory protein Ctha_1786 (250 aa).

This sequence belongs to the TACO1 family.

It is found in the cytoplasm. This chain is Probable transcriptional regulatory protein Ctha_1786, found in Chloroherpeton thalassium (strain ATCC 35110 / GB-78).